The primary structure comprises 718 residues: Mitochondrial potassium channel ATP-binding subunit (718 aa).

Residues 1–25 constitute a mitochondrion transit peptide; sequence MLVHLFRVGIRGGPFPGRLLPPLRF. 3 helical membrane passes run 128–148, 179–199, and 279–299; these read LLVLGVAVVLALGAALVNVQI, THLLILYGVQGLLTFGYLVLL, and LLLMLATPALMGVGTLMGSGL. An ABC transmembrane type-1 domain is found at 133 to 420; sequence VAVVLALGAA…LSVLFGQVVR (288 aa). Residues 455-692 form the ABC transporter domain; the sequence is VTFQNVCFSY…GGLYAELIRR (238 aa). ATP is bound at residue 490–497; sequence GQSGGGKT. Residues 697 to 718 form a disordered region; it reads APRTAAPLPKKPEGPRNHQHKS.

It belongs to the ABC transporter superfamily. ABCB family. Multidrug resistance exporter (TC 3.A.1.201) subfamily. As to quaternary structure, the mitochondrial potassium channel (mitoK(ATP)) is composed of 4 subunits of CCDC51/MITOK and 4 subunits of ABCB8/MITOSUR. Physically interacts with PAAT. Interacts with Neuropilin-1 (NRP1) in mitochondria.

It localises to the mitochondrion inner membrane. With respect to regulation, channel activity inhibited by ATP via ABCB8/MITOSUR subunit. ATP-binding subunit of the mitochondrial ATP-gated potassium channel (mitoK(ATP)). Together with pore-forming subunit CCDC51/MITOK of the mitoK(ATP) channel, mediates ATP-dependent potassium currents across the mitochondrial inner membrane. An increase in ATP intracellular levels closes the channel, inhibiting K(+) transport, whereas a decrease in ATP levels enhances K(+) uptake in the mitochondrial matrix. Plays a role in mitochondrial iron transport. Required for maintenance of normal cardiac function, possibly by influencing mitochondrial iron export and regulating the maturation of cytosolic iron sulfur cluster-containing enzymes. In Pongo abelii (Sumatran orangutan), this protein is Mitochondrial potassium channel ATP-binding subunit (ABCB8).